The chain runs to 319 residues: Ribonuclease Z (319 aa).

The Zn(2+) site is built by His62, His64, Asp66, His67, His139, Asp209, and His268. The active-site Proton acceptor is Asp66.

Belongs to the RNase Z family. Homodimer. Zn(2+) serves as cofactor.

The catalysed reaction is Endonucleolytic cleavage of RNA, removing extra 3' nucleotides from tRNA precursor, generating 3' termini of tRNAs. A 3'-hydroxy group is left at the tRNA terminus and a 5'-phosphoryl group is left at the trailer molecule.. In terms of biological role, zinc phosphodiesterase, which displays some tRNA 3'-processing endonuclease activity. Probably involved in tRNA maturation, by removing a 3'-trailer from precursor tRNA. This chain is Ribonuclease Z, found in Pseudomonas putida (strain ATCC 47054 / DSM 6125 / CFBP 8728 / NCIMB 11950 / KT2440).